Consider the following 140-residue polypeptide: Lymphocyte antigen 6L (140 aa).

A signal peptide spans 1 to 20 (MAPLLLVLWASLVSMELTGG). The UPAR/Ly6 domain occupies 31–124 (LSCFECFKVL…GSWEGFWSLP (94 aa)). Intrachain disulfides connect cysteine 33–cysteine 50 and cysteine 105–cysteine 110. Serine 116 carries GPI-anchor amidated serine lipidation. Positions 117 to 140 (WEGFWSLPGRLLLPMGLGLFCTLL) are cleaved as a propeptide — removed in mature form.

Its subcellular location is the cell membrane. In Mus musculus (Mouse), this protein is Lymphocyte antigen 6L.